Here is an 816-residue protein sequence, read N- to C-terminus: Lon protease (816 aa).

One can recognise a Lon N-terminal domain in the interval 40 to 244 (VPLIAVPSHP…KVLELLYEEL (205 aa)). 398–405 (GPPGVGKT) lines the ATP pocket. Positions 636–816 (AMSPGMVMGL…SMKEVIKLLF (181 aa)) constitute a Lon proteolytic domain. Residues S724 and K767 contribute to the active site.

The protein belongs to the peptidase S16 family. In terms of assembly, homohexamer. Organized in a ring with a central cavity.

Its subcellular location is the cytoplasm. It catalyses the reaction Hydrolysis of proteins in presence of ATP.. ATP-dependent serine protease that mediates the selective degradation of mutant and abnormal proteins as well as certain short-lived regulatory proteins. Required for cellular homeostasis and for survival from DNA damage and developmental changes induced by stress. Degrades polypeptides processively to yield small peptide fragments that are 5 to 10 amino acids long. Binds to DNA in a double-stranded, site-specific manner. This Borrelia duttonii (strain Ly) protein is Lon protease.